Here is a 328-residue protein sequence, read N- to C-terminus: Cytochrome c biogenesis protein CcsA (328 aa).

Helical transmembrane passes span 13–33, 46–66, 73–93, 101–121, 146–166, 234–254, 263–283, and 295–315; these read ISFS…LVNL, GIVI…IYSG, LYES…ISYF, LNAI…SGLL, MILG…LLVI, IISL…VWAN, WDPK…FLHI, and AIVA…VNLL.

It belongs to the CcmF/CycK/Ccl1/NrfE/CcsA family. In terms of assembly, may interact with Ccs1.

The protein resides in the plastid. Its subcellular location is the chloroplast thylakoid membrane. Required during biogenesis of c-type cytochromes (cytochrome c6 and cytochrome f) at the step of heme attachment. The chain is Cytochrome c biogenesis protein CcsA from Arabis hirsuta (Hairy rock-cress).